A 245-amino-acid chain; its full sequence is Ribosomal RNA small subunit methyltransferase J (245 aa).

S-adenosyl-L-methionine-binding positions include 94-95, 110-111, and aspartate 164; these read RD and ER.

This sequence belongs to the methyltransferase superfamily. RsmJ family.

It is found in the cytoplasm. The catalysed reaction is guanosine(1516) in 16S rRNA + S-adenosyl-L-methionine = N(2)-methylguanosine(1516) in 16S rRNA + S-adenosyl-L-homocysteine + H(+). Specifically methylates the guanosine in position 1516 of 16S rRNA. This Dechloromonas aromatica (strain RCB) protein is Ribosomal RNA small subunit methyltransferase J.